Reading from the N-terminus, the 473-residue chain is Ras-GEF domain-containing family member 1B (473 aa).

Residues 34-161 form the N-terminal Ras-GEF domain; sequence HDNNLLSGSL…NVQQMMQCLI (128 aa). A Ras-GEF domain is found at 205–453; it reads DPYTLAQQLT…YLASYESEGP (249 aa).

In terms of assembly, interacts with CCDC124 during cytokinesis. Interacts with Ras family proteins. In terms of tissue distribution, constitutively expressed in brain, intestine and testis. Low constitutive expression, if any, in heart, lung, lymph nodes and thymus. Up-regulated in heart, kidney, liver, lymph nodes, spleen and thymus at day 20 after infection with Trypanosoma cruzi. Not detected in muscle.

It is found in the early endosome. It localises to the late endosome. The protein localises to the midbody. Its function is as follows. Guanine nucleotide exchange factor (GEF) with specificity for RAP2A, it doesn't seems to activate other Ras family proteins (in vitro). The chain is Ras-GEF domain-containing family member 1B (Rasgef1b) from Mus musculus (Mouse).